The following is a 119-amino-acid chain: Large ribosomal subunit protein bL19 (119 aa).

Belongs to the bacterial ribosomal protein bL19 family.

In terms of biological role, this protein is located at the 30S-50S ribosomal subunit interface and may play a role in the structure and function of the aminoacyl-tRNA binding site. In Pediococcus pentosaceus (strain ATCC 25745 / CCUG 21536 / LMG 10740 / 183-1w), this protein is Large ribosomal subunit protein bL19.